Here is a 308-residue protein sequence, read N- to C-terminus: Ornithine carbamoyltransferase (308 aa).

Residues 57 to 60 (STRT), Gln84, Arg108, and 135 to 138 (HPCQ) contribute to the carbamoyl phosphate site. L-ornithine contacts are provided by residues Asn166, Asp224, and 228–229 (SM). Residues 264–265 (CL) and Arg292 each bind carbamoyl phosphate.

The protein belongs to the aspartate/ornithine carbamoyltransferase superfamily. OTCase family.

The protein resides in the cytoplasm. The catalysed reaction is carbamoyl phosphate + L-ornithine = L-citrulline + phosphate + H(+). It functions in the pathway amino-acid degradation; L-arginine degradation via ADI pathway; carbamoyl phosphate from L-arginine: step 2/2. Its function is as follows. Reversibly catalyzes the transfer of the carbamoyl group from carbamoyl phosphate (CP) to the N(epsilon) atom of ornithine (ORN) to produce L-citrulline. In Ralstonia pickettii (strain 12J), this protein is Ornithine carbamoyltransferase.